The chain runs to 339 residues: Anthranilate phosphoribosyltransferase (339 aa).

5-phospho-alpha-D-ribose 1-diphosphate is bound by residues glycine 79, 82–83 (GD), serine 87, 89–92 (NIST), 107–115 (KHGNRSISS), and serine 119. Residue glycine 79 participates in anthranilate binding. A Mg(2+)-binding site is contributed by serine 91. Anthranilate is bound at residue asparagine 110. Arginine 165 is a binding site for anthranilate. Mg(2+) is bound by residues aspartate 224 and glutamate 225.

It belongs to the anthranilate phosphoribosyltransferase family. Homodimer. It depends on Mg(2+) as a cofactor.

The enzyme catalyses N-(5-phospho-beta-D-ribosyl)anthranilate + diphosphate = 5-phospho-alpha-D-ribose 1-diphosphate + anthranilate. It participates in amino-acid biosynthesis; L-tryptophan biosynthesis; L-tryptophan from chorismate: step 2/5. In terms of biological role, catalyzes the transfer of the phosphoribosyl group of 5-phosphorylribose-1-pyrophosphate (PRPP) to anthranilate to yield N-(5'-phosphoribosyl)-anthranilate (PRA). The sequence is that of Anthranilate phosphoribosyltransferase from Listeria innocua serovar 6a (strain ATCC BAA-680 / CLIP 11262).